A 1755-amino-acid chain; its full sequence is Transposon Ty1-JR1 Gag-Pol polyprotein (1755 aa).

Over residues M1–S16 the composition is skewed to low complexity. Disordered stretches follow at residues M1–Q93, P126–P173, and G352–T421. Polar residues-rich tracts occupy residues T48–S60 and Q127–F152. Over residues T153–T165 the composition is skewed to low complexity. Positions N299 to H401 are RNA-binding. Over residues N402–S418 the composition is skewed to low complexity. At S416 the chain carries Phosphoserine. D461 acts as the For protease activity; shared with dimeric partner in catalysis. Positions N583–C640 are integrase-type zinc finger-like. Residues N660 to P835 enclose the Integrase catalytic domain. Residues D671 and D736 each coordinate Mg(2+). Disordered stretches follow at residues S956 to K1087, R1092 to P1111, and D1130 to E1186. Positions S960–T969 are enriched in low complexity. Residues S1005–T1015 show a composition bias toward polar residues. Positions E1038 to S1053 are enriched in basic and acidic residues. Polar residues-rich tracts occupy residues Y1054–D1082 and P1101–P1111. The short motif at K1178 to R1212 is the Bipartite nuclear localization signal element. Residues N1338–Q1476 form the Reverse transcriptase Ty1/copia-type domain. 6 residues coordinate Mg(2+): D1346, D1427, D1428, D1610, E1652, and D1685. The region spanning D1610–K1752 is the RNase H Ty1/copia-type domain.

The capsid protein forms a homotrimer, from which the VLPs are assembled. The protease is a homodimer, whose active site consists of two apposed aspartic acid residues. Post-translationally, initially, virus-like particles (VLPs) are composed of the structural unprocessed proteins Gag and Gag-Pol, and also contain the host initiator methionine tRNA (tRNA(i)-Met) which serves as a primer for minus-strand DNA synthesis, and a dimer of genomic Ty RNA. Processing of the polyproteins occurs within the particle and proceeds by an ordered pathway, called maturation. First, the protease (PR) is released by autocatalytic cleavage of the Gag-Pol polyprotein yielding capsid protein p45 and a Pol-p154 precursor protein. This cleavage is a prerequisite for subsequent processing of Pol-p154 at the remaining sites to release the mature structural and catalytic proteins. Maturation takes place prior to the RT reaction and is required to produce transposition-competent VLPs.

It is found in the cytoplasm. Its subcellular location is the nucleus. The enzyme catalyses DNA(n) + a 2'-deoxyribonucleoside 5'-triphosphate = DNA(n+1) + diphosphate. The catalysed reaction is Endonucleolytic cleavage to 5'-phosphomonoester.. Its function is as follows. Capsid protein (CA) is the structural component of the virus-like particle (VLP), forming the shell that encapsulates the retrotransposons dimeric RNA genome. The particles are assembled from trimer-clustered units and there are holes in the capsid shells that allow for the diffusion of macromolecules. CA also has nucleocapsid-like chaperone activity, promoting primer tRNA(i)-Met annealing to the multipartite primer-binding site (PBS), dimerization of Ty1 RNA and initiation of reverse transcription. Functionally, the aspartyl protease (PR) mediates the proteolytic cleavages of the Gag and Gag-Pol polyproteins after assembly of the VLP. In terms of biological role, reverse transcriptase/ribonuclease H (RT) is a multifunctional enzyme that catalyzes the conversion of the retro-elements RNA genome into dsDNA within the VLP. The enzyme displays a DNA polymerase activity that can copy either DNA or RNA templates, and a ribonuclease H (RNase H) activity that cleaves the RNA strand of RNA-DNA heteroduplexes during plus-strand synthesis and hydrolyzes RNA primers. The conversion leads to a linear dsDNA copy of the retrotransposon that includes long terminal repeats (LTRs) at both ends. Integrase (IN) targets the VLP to the nucleus, where a subparticle preintegration complex (PIC) containing at least integrase and the newly synthesized dsDNA copy of the retrotransposon must transit the nuclear membrane. Once in the nucleus, integrase performs the integration of the dsDNA into the host genome. This chain is Transposon Ty1-JR1 Gag-Pol polyprotein (TY1B-JR1), found in Saccharomyces cerevisiae (strain ATCC 204508 / S288c) (Baker's yeast).